A 358-amino-acid polypeptide reads, in one-letter code: NADH-quinone oxidoreductase subunit H (358 aa).

A run of 8 helical transmembrane segments spans residues 29 to 49, 95 to 115, 130 to 150, 176 to 196, 206 to 226, 258 to 280, 297 to 317, and 334 to 354; these read LIKIICVVLPLLGAVAYLTLW, GLFYLGPVMAIMPALGAWAVI, LLLVMAITSIEVYGVIIAGWA, FCFLVVIMVSGSMNLTEIVAV, GLGFLSWNWLPLFPIFIVYLI, GFAIFFLAEYASMWLVSILAVVM, GWIWLGIKTFLVVSMFIWIRA, and IFIPVTLVWLLVVGAWLLSPW.

This sequence belongs to the complex I subunit 1 family. In terms of assembly, NDH-1 is composed of 14 different subunits. Subunits NuoA, H, J, K, L, M, N constitute the membrane sector of the complex.

The protein resides in the cell inner membrane. It carries out the reaction a quinone + NADH + 5 H(+)(in) = a quinol + NAD(+) + 4 H(+)(out). Functionally, NDH-1 shuttles electrons from NADH, via FMN and iron-sulfur (Fe-S) centers, to quinones in the respiratory chain. The immediate electron acceptor for the enzyme in this species is believed to be ubiquinone. Couples the redox reaction to proton translocation (for every two electrons transferred, four hydrogen ions are translocated across the cytoplasmic membrane), and thus conserves the redox energy in a proton gradient. This subunit may bind ubiquinone. This Acidovorax sp. (strain JS42) protein is NADH-quinone oxidoreductase subunit H.